Consider the following 88-residue polypeptide: Small ribosomal subunit protein uS17 (88 aa).

It belongs to the universal ribosomal protein uS17 family. Part of the 30S ribosomal subunit.

One of the primary rRNA binding proteins, it binds specifically to the 5'-end of 16S ribosomal RNA. The polypeptide is Small ribosomal subunit protein uS17 (Nitratidesulfovibrio vulgaris (strain ATCC 29579 / DSM 644 / CCUG 34227 / NCIMB 8303 / VKM B-1760 / Hildenborough) (Desulfovibrio vulgaris)).